The chain runs to 95 residues: Corticostatin-3 (95 aa).

Residues 1–19 (MRTLALLAAILLVALQAQA) form the signal peptide. The propeptide occupies 20-62 (EHVSVSIDEVVDQQPPQAEDQDVAIYVKEHESSALEALGVKAG). 3 cysteine pairs are disulfide-bonded: Cys65–Cys93, Cys67–Cys82, and Cys72–Cys92.

The protein belongs to the alpha-defensin family.

It is found in the secreted. Functionally, this peptide has antibiotic, anti-fungi and antiviral activity. It also inhibits corticotropin (ACTH) stimulated corticosterone production. This Oryctolagus cuniculus (Rabbit) protein is Corticostatin-3.